Consider the following 43-residue polypeptide: Protein PsbN (43 aa).

Residues 4-24 (ATIIVIFVSSLLLGITAYSIY) form a helical membrane-spanning segment.

It belongs to the PsbN family.

The protein localises to the plastid. It localises to the chloroplast thylakoid membrane. May play a role in photosystem I and II biogenesis. The protein is Protein PsbN of Trieres chinensis (Marine centric diatom).